Here is a 199-residue protein sequence, read N- to C-terminus: dTTP/UTP pyrophosphatase (199 aa).

Aspartate 79 (proton acceptor) is an active-site residue.

This sequence belongs to the Maf family. YhdE subfamily. It depends on a divalent metal cation as a cofactor.

The protein resides in the cytoplasm. The catalysed reaction is dTTP + H2O = dTMP + diphosphate + H(+). It catalyses the reaction UTP + H2O = UMP + diphosphate + H(+). In terms of biological role, nucleoside triphosphate pyrophosphatase that hydrolyzes dTTP and UTP. May have a dual role in cell division arrest and in preventing the incorporation of modified nucleotides into cellular nucleic acids. The protein is dTTP/UTP pyrophosphatase of Porphyromonas gingivalis (strain ATCC 33277 / DSM 20709 / CIP 103683 / JCM 12257 / NCTC 11834 / 2561).